The following is an 820-amino-acid chain: Mediator of RNA polymerase II transcription subunit 16 (820 aa).

WD repeat units lie at residues 74 to 114 (SNKY…SEWK), 621 to 665 (RSFM…PVFS), and 757 to 811 (SNDN…KCRC).

Belongs to the Mediator complex subunit 16 family. In terms of assembly, component of the Mediator complex.

It is found in the nucleus. Functionally, component of the Mediator complex, a coactivator involved in the regulated transcription of nearly all RNA polymerase II-dependent genes. Mediator functions as a bridge to convey information from gene-specific regulatory proteins to the basal RNA polymerase II transcription machinery. Mediator is recruited to promoters by direct interactions with regulatory proteins and serves as a scaffold for the assembly of a functional preinitiation complex with RNA polymerase II and the general transcription factors. This is Mediator of RNA polymerase II transcription subunit 16 (MED16) from Aedes aegypti (Yellowfever mosquito).